The primary structure comprises 102 residues: Small ribosomal subunit protein uS10 (102 aa).

This sequence belongs to the universal ribosomal protein uS10 family. Part of the 30S ribosomal subunit.

In terms of biological role, involved in the binding of tRNA to the ribosomes. This is Small ribosomal subunit protein uS10 from Thiobacillus denitrificans (strain ATCC 25259 / T1).